We begin with the raw amino-acid sequence, 611 residues long: Pescadillo homolog (611 aa).

The tract at residues 310–335 (VQMGDPDEASPGEEEQFVAHASKSAP) is disordered. Acidic residues predominate over residues 314 to 325 (DPDEASPGEEEQ). The BRCT domain occupies 354-455 (PSSRLFAPYT…KILLEDTYAQ (102 aa)). 2 disordered regions span residues 469–506 (YEGAYDPTAATNDADMDVETDGEEGEADASGDEKESNT) and 545–611 (VKKA…AGGK). The segment covering 482–498 (ADMDVETDGEEGEADAS) has biased composition (acidic residues). Basic and acidic residues-rich tracts occupy residues 552 to 569 (KKPDTASKATEEAEKDMN) and 579 to 602 (KLYEKMKYSQQKKAAEKEKLEQRK). The stretch at 580-609 (LYEKMKYSQQKKAAEKEKLEQRKKQLQKAG) forms a coiled coil.

Belongs to the pescadillo family. Component of the NOP7 complex, composed of ERB1, NOP7 and YTM1. The complex is held together by ERB1, which interacts with NOP7 via its N-terminal domain and with YTM1 via a high-affinity interaction between the seven-bladed beta-propeller domains of the 2 proteins. The NOP7 complex associates with the 66S pre-ribosome.

It is found in the nucleus. The protein localises to the nucleolus. It localises to the nucleoplasm. Component of the NOP7 complex, which is required for maturation of the 25S and 5.8S ribosomal RNAs and formation of the 60S ribosome. The polypeptide is Pescadillo homolog (Coprinopsis cinerea (strain Okayama-7 / 130 / ATCC MYA-4618 / FGSC 9003) (Inky cap fungus)).